Consider the following 1264-residue polypeptide: Phosphatidylinositol 3,4,5-trisphosphate 5-phosphatase 2 (1264 aa).

The SH2 domain occupies 26–122 (WYHRDLSRAA…GLVCALLLPV (97 aa)). The span at 124 to 137 (REREPDPPDDRDVS) shows a compositional bias: basic and acidic residues. Positions 124-182 (REREPDPPDDRDVSDGEDEKPPLPPRSGSTSISAPVGPGSPPAAPETPTTPAAESAPNG) are disordered. Serine 137 is subject to Phosphoserine. Residues 169-180 (ETPTTPAAESAP) are compositionally biased toward low complexity. At threonine 170 the chain carries Phosphothreonine. 2 positions are modified to phosphoserine: serine 246 and serine 358. Position 892 is a phosphotyrosine (tyrosine 892). At serine 896 the chain carries Phosphoserine. Residues 903 to 1123 (GAKSKAPSVS…TFLGEVASGD (221 aa)) form a disordered region. Residues 944–954 (PPPTGRPPAPP) show a composition bias toward pro residues. The SH3-binding motif lies at 950–955 (PPAPPR). Residues 957-971 (ASREEPLTPRLKAEG) are compositionally biased toward basic and acidic residues. The residue at position 964 (threonine 964) is a Phosphothreonine. Positions 989–992 (NPAY) match the NPXY motif motif. Position 992 is a phosphotyrosine (tyrosine 992). Pro residues-rich tracts occupy residues 1002–1017 (LLPPEPPSPARAPVPP), 1054–1065 (LPPPDFPPPPLP), and 1093–1110 (GPPPPKAHPRPPLPPGPS). Serine 1137 is subject to Phosphoserine. A disordered region spans residues 1140–1178 (DYAPAGPGRSVLLPGPLELQPPRGLPSDYGRPLSFPPPR). Tyrosine 1141 and tyrosine 1168 each carry phosphotyrosine. The 55-residue stretch at 1210 to 1264 (WLRAIGLERYEEGLVHNGWDDLEFLSDITEEDLEEAGVQDPAHKRLLLDTLQLSK) folds into the SAM domain. Serine 1263 carries the phosphoserine modification.

This sequence belongs to the inositol 1,4,5-trisphosphate 5-phosphatase family. Interacts with tyrosine phosphorylated form of SHC1. Interacts with EGFR. Upon stimulation by the EGF signaling pathway, it forms a complex with SHC1 and EGFR. Interacts with cytoskeletal protein SORBS3/vinexin, promoting its localization to the periphery of cells. Forms a complex with filamin (FLNA or FLNB), actin, GPIb (GP1BA or GP1BB) that regulates cortical and submembraneous actin. Interacts with c-Met/MET, when c-Met/MET is phosphorylated on 'Tyr-1356'. Interacts with p130Cas/BCAR1. Interacts with CENTD3/ARAP3 via its SAM domain. Interacts with c-Cbl/CBL and CAP/SORBS1. Interacts with activated EPHA2 receptor. Interacts with receptor FCGR2A. Interacts with receptor FCGR2B. Interacts with tyrosine kinase ABL1. Interacts with tyrosine kinase TEC. Interacts with CSF1R. Interacts (via N-terminus) with SH3YL1 (via SH3 domain). Interacts with FCRL6 (tyrosine phosphorylated form). Interacts (via SH2 domain) with tyrosine phosphorylated KLRC1 (via ITIM). Interacts with NEDD9/HEF1. Post-translationally, tyrosine phosphorylated by the members of the SRC family after exposure to a diverse array of extracellular stimuli such as insulin, growth factors such as EGF or PDGF, chemokines, integrin ligands and hypertonic and oxidative stress. May be phosphorylated upon IgG receptor FCGR2B-binding. Phosphorylated at Tyr-992 following cell attachment and spreading. Phosphorylated at Tyr-1168 following EGF signaling pathway stimulation. Phosphorylated at Thr-964 in response to PDGF.

It is found in the cytoplasm. It localises to the cytosol. The protein localises to the membrane. Its subcellular location is the cell projection. The protein resides in the filopodium. It is found in the lamellipodium. It localises to the basal cell membrane. The protein localises to the nucleus. Its subcellular location is the nucleus speckle. The protein resides in the cytoskeleton. It is found in the spindle pole. It catalyses the reaction a 1,2-diacyl-sn-glycero-3-phospho-(1D-myo-inositol-3,4,5-trisphosphate) + H2O = a 1,2-diacyl-sn-glycero-3-phospho-(1D-myo-inositol-3,4-bisphosphate) + phosphate. It carries out the reaction 1,2-dioctanoyl-sn-glycero-3-phospho-(1D-myo-inositol-3,4,5-trisphosphate) + H2O = 1,2-dioctanoyl-sn-glycero-3-phospho-(1D-myo-inositol-3,4-bisphosphate) + phosphate. The enzyme catalyses 1,2-dihexadecanoyl-sn-glycero-3-phospho-(1D-myo-inositol-3,4,5-trisphosphate) + H2O = 1,2-dihexadecanoyl-sn-glycero-3-phospho-(1D-myo-inositol-3,4-bisphosphate) + phosphate. Activated upon translocation to the sites of synthesis of PtdIns(3,4,5)P3 in the membrane. Enzymatic activity is enhanced in the presence of phosphatidylserine. Functionally, phosphatidylinositol (PtdIns) phosphatase that specifically hydrolyzes the 5-phosphate of phosphatidylinositol-3,4,5-trisphosphate (PtdIns(3,4,5)P3) to produce PtdIns(3,4)P2, thereby negatively regulating the PI3K (phosphoinositide 3-kinase) pathways. Required for correct mitotic spindle orientation and therefore progression of mitosis. Plays a central role in regulation of PI3K-dependent insulin signaling, although the precise molecular mechanisms and signaling pathways remain unclear. While overexpression reduces both insulin-stimulated MAP kinase and Akt activation, its absence does not affect insulin signaling or GLUT4 trafficking. Confers resistance to dietary obesity. May act by regulating AKT2, but not AKT1, phosphorylation at the plasma membrane. Part of a signaling pathway that regulates actin cytoskeleton remodeling. Required for the maintenance and dynamic remodeling of actin structures as well as in endocytosis, having a major impact on ligand-induced EGFR internalization and degradation. Participates in regulation of cortical and submembraneous actin by hydrolyzing PtdIns(3,4,5)P3 thereby regulating membrane ruffling. Regulates cell adhesion and cell spreading. Required for HGF-mediated lamellipodium formation, cell scattering and spreading. Acts as a negative regulator of EPHA2 receptor endocytosis by inhibiting via PI3K-dependent Rac1 activation. Acts as a regulator of neuritogenesis by regulating PtdIns(3,4,5)P3 level and is required to form an initial protrusive pattern, and later, maintain proper neurite outgrowth. Acts as a negative regulator of the FC-gamma-RIIA receptor (FCGR2A). Mediates signaling from the FC-gamma-RIIB receptor (FCGR2B), playing a central role in terminating signal transduction from activating immune/hematopoietic cell receptor systems. Involved in EGF signaling pathway. Upon stimulation by EGF, it is recruited by EGFR and dephosphorylates PtdIns(3,4,5)P3. Plays a negative role in regulating the PI3K-PKB pathway, possibly by inhibiting PKB activity. Down-regulates Fc-gamma-R-mediated phagocytosis in macrophages independently of INPP5D/SHIP1. In macrophages, down-regulates NF-kappa-B-dependent gene transcription by regulating macrophage colony-stimulating factor (M-CSF)-induced signaling. Plays a role in the localization of AURKA and NEDD9/HEF1 to the basolateral membrane at interphase in polarized cysts, thereby mediates cell cycle homeostasis, cell polarization and cilia assembly. Additionally promotion of cilia growth is also facilitated by hydrolysis of (PtdIns(3,4,5)P3) to PtdIns(3,4)P2. Promotes formation of apical membrane-initiation sites during the initial stages of lumen formation via Rho family-induced actin filament organization and CTNNB1 localization to cell-cell contacts. May also hydrolyze PtdIns(1,3,4,5)P4, and could thus affect the levels of the higher inositol polyphosphates like InsP6. Involved in endochondral ossification. This is Phosphatidylinositol 3,4,5-trisphosphate 5-phosphatase 2 from Canis lupus familiaris (Dog).